Here is a 160-residue protein sequence, read N- to C-terminus: Probable nucleoside diphosphate kinase DDB_G0292928 (160 aa).

Lys-12, Phe-61, Arg-103, Thr-109, Arg-122, and Asn-132 together coordinate ATP. The Pros-phosphohistidine intermediate role is filled by His-135.

It belongs to the NDK family. The cofactor is Mg(2+).

It catalyses the reaction a 2'-deoxyribonucleoside 5'-diphosphate + ATP = a 2'-deoxyribonucleoside 5'-triphosphate + ADP. The catalysed reaction is a ribonucleoside 5'-diphosphate + ATP = a ribonucleoside 5'-triphosphate + ADP. This chain is Probable nucleoside diphosphate kinase DDB_G0292928, found in Dictyostelium discoideum (Social amoeba).